Here is a 122-residue protein sequence, read N- to C-terminus: Histone H2B.2 (122 aa).

Positions 1–10 (MAPKKAPAAT) are enriched in low complexity. The tract at residues 1 to 28 (MAPKKAPAATTEKKVKKAPTTEKKNKKK) is disordered. A N,N,N-trimethylalanine modification is found at A2. An N6-acetyllysine mark is found at K5 and K42. A Glycyl lysine isopeptide (Lys-Gly) (interchain with G-Cter in ubiquitin) cross-link involves residue K116.

The protein belongs to the histone H2B family. In terms of assembly, the nucleosome is a histone octamer containing two molecules each of H2A, H2B, H3 and H4 assembled in one H3-H4 heterotetramer and two H2A-H2B heterodimers. The octamer wraps approximately 147 bp of DNA. Post-translationally, acetylation occurs almost exclusively in the MAC. In terms of processing, monoubiquitination to form H2BK115ub1 gives a specific tag for epigenetic transcriptional activation and is also prerequisite for H3K4me and H3K79me formation.

It localises to the nucleus. The protein resides in the chromosome. Functionally, core component of nucleosome. Nucleosomes wrap and compact DNA into chromatin, limiting DNA accessibility to the cellular machineries which require DNA as a template. Histones thereby play a central role in transcription regulation, DNA repair, DNA replication and chromosomal stability. DNA accessibility is regulated via a complex set of post-translational modifications of histones, also called histone code, and nucleosome remodeling. The protein is Histone H2B.2 (HTB2) of Tetrahymena thermophila (strain SB210).